The sequence spans 276 residues: NH(3)-dependent NAD(+) synthetase (276 aa).

43–50 is a binding site for ATP; sequence GISGGVDS. Position 49 (D49) interacts with Mg(2+). A deamido-NAD(+)-binding site is contributed by R146. T166 contacts ATP. E171 contributes to the Mg(2+) binding site. K179 and D186 together coordinate deamido-NAD(+). ATP contacts are provided by K195 and T217. 266–267 provides a ligand contact to deamido-NAD(+); the sequence is HK.

This sequence belongs to the NAD synthetase family. In terms of assembly, homodimer.

The catalysed reaction is deamido-NAD(+) + NH4(+) + ATP = AMP + diphosphate + NAD(+) + H(+). Its pathway is cofactor biosynthesis; NAD(+) biosynthesis; NAD(+) from deamido-NAD(+) (ammonia route): step 1/1. In terms of biological role, catalyzes the ATP-dependent amidation of deamido-NAD to form NAD. Uses ammonia as a nitrogen source. This is NH(3)-dependent NAD(+) synthetase from Psychromonas ingrahamii (strain DSM 17664 / CCUG 51855 / 37).